Consider the following 491-residue polypeptide: GTPase Der (491 aa).

The EngA-type G 1 domain occupies proline 3–aspartate 166. GTP-binding positions include glycine 9–serine 16, aspartate 56–isoleucine 60, and asparagine 118–aspartate 121. The segment at arginine 164–serine 191 is disordered. The segment covering aspartate 166–glycine 181 has biased composition (acidic residues). Over residues glutamate 182–serine 191 the composition is skewed to basic and acidic residues. The region spanning isoleucine 196 to valine 369 is the EngA-type G 2 domain. Residues glycine 202–serine 209, aspartate 249–valine 253, and asparagine 314–aspartate 317 each bind GTP. One can recognise a KH-like domain in the interval threonine 370–aspartate 454. Over residues glycine 452 to leucine 464 the composition is skewed to basic and acidic residues. The disordered stretch occupies residues glycine 452–arginine 491. Over residues asparagine 470–arginine 491 the composition is skewed to basic residues.

The protein belongs to the TRAFAC class TrmE-Era-EngA-EngB-Septin-like GTPase superfamily. EngA (Der) GTPase family. Associates with the 50S ribosomal subunit.

GTPase that plays an essential role in the late steps of ribosome biogenesis. This Azotobacter vinelandii (strain DJ / ATCC BAA-1303) protein is GTPase Der.